The sequence spans 346 residues: Uroporphyrinogen decarboxylase (346 aa).

Residues 23–27, aspartate 73, tyrosine 151, serine 206, and histidine 321 each bind substrate; that span reads RQAGR.

Belongs to the uroporphyrinogen decarboxylase family. Homodimer.

It localises to the cytoplasm. It catalyses the reaction uroporphyrinogen III + 4 H(+) = coproporphyrinogen III + 4 CO2. Its pathway is porphyrin-containing compound metabolism; protoporphyrin-IX biosynthesis; coproporphyrinogen-III from 5-aminolevulinate: step 4/4. Functionally, catalyzes the decarboxylation of four acetate groups of uroporphyrinogen-III to yield coproporphyrinogen-III. The protein is Uroporphyrinogen decarboxylase of Sulfurovum sp. (strain NBC37-1).